We begin with the raw amino-acid sequence, 802 residues long: Pyrophosphate-energized membrane proton pump 3 (802 aa).

Helical transmembrane passes span L41–G61, P66–T86, Y118–F138, V160–V180, A206–Y226, and L246–L266. K273 is a substrate binding site. D276, D280, and D306 together coordinate Mg(2+). Helical transmembrane passes span F348–L368, M386–A406, W421–I441, I468–I491, and G511–L531. Mg(2+)-binding residues include D541 and N568. The next 4 membrane-spanning stretches (helical) occupy residues F577–V597, V615–A635, G686–Y706, and V716–N736. The Mg(2+) site is built by D743 and D773. K776 serves as a coordination point for substrate. Residues S782–L802 form a helical membrane-spanning segment.

This sequence belongs to the H(+)-translocating pyrophosphatase (TC 3.A.10) family. K(+)-insensitive subfamily. In terms of assembly, monomer.

Its subcellular location is the golgi apparatus membrane. The catalysed reaction is diphosphate + H2O + H(+)(in) = 2 phosphate + 2 H(+)(out). This is Pyrophosphate-energized membrane proton pump 3 (AVPL2) from Arabidopsis thaliana (Mouse-ear cress).